The sequence spans 361 residues: Phosphoserine aminotransferase (361 aa).

L-glutamate is bound at residue R43. Residues 77–78 (AS), W103, T153, D173, and Q196 contribute to the pyridoxal 5'-phosphate site. Position 197 is an N6-(pyridoxal phosphate)lysine (K197). 238–239 (NT) contacts pyridoxal 5'-phosphate.

It belongs to the class-V pyridoxal-phosphate-dependent aminotransferase family. SerC subfamily. As to quaternary structure, homodimer. Requires pyridoxal 5'-phosphate as cofactor.

Its subcellular location is the cytoplasm. It carries out the reaction O-phospho-L-serine + 2-oxoglutarate = 3-phosphooxypyruvate + L-glutamate. The enzyme catalyses 4-(phosphooxy)-L-threonine + 2-oxoglutarate = (R)-3-hydroxy-2-oxo-4-phosphooxybutanoate + L-glutamate. The protein operates within amino-acid biosynthesis; L-serine biosynthesis; L-serine from 3-phospho-D-glycerate: step 2/3. It participates in cofactor biosynthesis; pyridoxine 5'-phosphate biosynthesis; pyridoxine 5'-phosphate from D-erythrose 4-phosphate: step 3/5. Catalyzes the reversible conversion of 3-phosphohydroxypyruvate to phosphoserine and of 3-hydroxy-2-oxo-4-phosphonooxybutanoate to phosphohydroxythreonine. In Ectopseudomonas mendocina (strain ymp) (Pseudomonas mendocina), this protein is Phosphoserine aminotransferase.